Consider the following 73-residue polypeptide: Neuropeptide-like protein 29 (73 aa).

Residues 1–22 (MISTSSILVLVVLLACFMAASA) form the signal peptide. Tyrosine amide is present on residues Tyr-29, Tyr-39, Tyr-47, Tyr-55, and Tyr-63. Trp-71 is modified (tryptophan amide).

It belongs to the YARP (YGGW-amide related peptide) family. As to expression, weakly or not expressed in absence of infection. Upon infection by D.coniospora, it is expressed in hypoderm. Also expressed in perivulval cells when D.coniospora spores adhere to this region. Expressed in hypodermis upon physical injury.

Its subcellular location is the secreted. In terms of biological role, antimicrobial peptides that have antibacterial activity against the Gram-negative bacteria S.marcescens. Has antifungal activity against D.coniospora. May play a role in response to physical injury and osmotic stress. Through the neuropeptide receptor nlp-29, induces sleep upon activation of the innate immune response to molting and injury to the adult epidermis. The sequence is that of Neuropeptide-like protein 29 from Caenorhabditis elegans.